The following is a 370-amino-acid chain: Peptide chain release factor 1 (370 aa).

Q239 bears the N5-methylglutamine mark.

Belongs to the prokaryotic/mitochondrial release factor family. Post-translationally, methylated by PrmC. Methylation increases the termination efficiency of RF1.

Its subcellular location is the cytoplasm. Its function is as follows. Peptide chain release factor 1 directs the termination of translation in response to the peptide chain termination codons UAG and UAA. This Bacteroides thetaiotaomicron (strain ATCC 29148 / DSM 2079 / JCM 5827 / CCUG 10774 / NCTC 10582 / VPI-5482 / E50) protein is Peptide chain release factor 1.